Consider the following 463-residue polypeptide: Sodium-coupled neutral amino acid transporter 7 (463 aa).

Serine 28 carries the phosphoserine modification. The next 11 helical transmembrane spans lie at 56 to 76 (AIFIVVNACLGAGLLNFPAAF), 82 to 102 (VAAGITLQMAMLVFIISGLVI), 130 to 150 (LCEVAIATYTFGTCIAFLIII), 179 to 199 (FTISLTAFLFILPLSIPREIG), 206 to 226 (FLSVVGTWYVTAIIIIKYIWP), 240 to 260 (ASWIAVFNAMPTICFGFQCHV), 283 to 303 (AAMVIALAVYMGTGICGFLTF), 320 to 340 (MAVAVARAFIILSVLTSYPIL), 372 to 392 (VLQTLVWFLLTLLLALFIPDI), 396 to 416 (ISVIGGLAACFIFVFPGLCLI), and 429 to 449 (ASWWAMVSYGVLLVTLGAFIF).

It belongs to the amino acid/polyamine transporter 2 family. In terms of assembly, interacts with the mTORC1 complex; this interaction mediates the recruitment of mTORC1 to the lysosome and its subsequent activation.

Its subcellular location is the lysosome membrane. It localises to the cell projection. The protein resides in the axon. The enzyme catalyses L-asparagine(in) + Na(+)(in) = L-asparagine(out) + Na(+)(out). It carries out the reaction L-glutamine(in) + Na(+)(in) = L-glutamine(out) + Na(+)(out). Symporter that selectively cotransports sodium ions and amino acids, such as L-glutamine and L-asparagine from the lysosome into the cytoplasm and may participates in mTORC1 activation. The transport activity requires an acidic lysosomal lumen. The polypeptide is Sodium-coupled neutral amino acid transporter 7 (Bos taurus (Bovine)).